A 142-amino-acid chain; its full sequence is Neuritin (142 aa).

The first 27 residues, 1-27 (MGLTLSGRYISLFLAVQIAYLLQAVRA), serve as a signal peptide directing secretion. Residue alanine 112 is the site of GPI-anchor amidated alanine attachment. The propeptide at 113–142 (GGNGAIRSSVPFGVTLLITALSALVTWMQF) is removed in mature form.

It belongs to the neuritin family.

The protein localises to the cell membrane. It localises to the synapse. Modulates postsynaptic dendritic arbor elaboration and synaptic maturation. In Danio rerio (Zebrafish), this protein is Neuritin (nrn1).